A 192-amino-acid polypeptide reads, in one-letter code: Probable nicotinate-nucleotide adenylyltransferase (192 aa).

Belongs to the NadD family.

The catalysed reaction is nicotinate beta-D-ribonucleotide + ATP + H(+) = deamido-NAD(+) + diphosphate. The protein operates within cofactor biosynthesis; NAD(+) biosynthesis; deamido-NAD(+) from nicotinate D-ribonucleotide: step 1/1. Its function is as follows. Catalyzes the reversible adenylation of nicotinate mononucleotide (NaMN) to nicotinic acid adenine dinucleotide (NaAD). In Staphylococcus haemolyticus (strain JCSC1435), this protein is Probable nicotinate-nucleotide adenylyltransferase.